The primary structure comprises 98 residues: IVNTGTVLQVGDGIARIAQIPVSEAYLGRVINALAKPIDGRLIESPAPGIISRASSVAQVVNALQERKFLVELRTQFQEIISSTKLRNQADQTITLIR.

Belongs to the ATPase alpha/beta chains family. In terms of assembly, F-type ATPases have 2 components, CF(1) - the catalytic core - and CF(0) - the membrane proton channel. CF(1) has five subunits: alpha(3), beta(3), gamma(1), delta(1), epsilon(1). CF(0) has four main subunits: a, b, b' and c.

It is found in the plastid. It localises to the chloroplast thylakoid membrane. The enzyme catalyses ATP + H2O + 4 H(+)(in) = ADP + phosphate + 5 H(+)(out). In terms of biological role, produces ATP from ADP in the presence of a proton gradient across the membrane. The alpha chain is a regulatory subunit. The chain is ATP synthase subunit alpha, chloroplastic (atpA) from Populus euphratica (Euphrates poplar).